The chain runs to 371 residues: D-erythrose-4-phosphate dehydrogenase (371 aa).

12-13 (RI) contacts NAD(+). Substrate is bound by residues 154 to 156 (SCT), Arg-200, 213 to 214 (TK), and Arg-236. Residue Cys-155 is the Nucleophile of the active site. Asn-318 contacts NAD(+).

The protein belongs to the glyceraldehyde-3-phosphate dehydrogenase family. Epd subfamily. Homotetramer.

Its subcellular location is the cytoplasm. It carries out the reaction D-erythrose 4-phosphate + NAD(+) + H2O = 4-phospho-D-erythronate + NADH + 2 H(+). Its pathway is cofactor biosynthesis; pyridoxine 5'-phosphate biosynthesis; pyridoxine 5'-phosphate from D-erythrose 4-phosphate: step 1/5. Functionally, catalyzes the NAD-dependent conversion of D-erythrose 4-phosphate to 4-phosphoerythronate. The polypeptide is D-erythrose-4-phosphate dehydrogenase (Psychromonas ingrahamii (strain DSM 17664 / CCUG 51855 / 37)).